Reading from the N-terminus, the 163-residue chain is MPSFDIVSEVDMREVQNAVENATRELETRFDFRNVTASFELNEKNQTIKVTSESDFQVNQLLDILRAKLLKRGIEGSSIEVPEEFDHSGKTWSVEAKLKQGIDSAMAKKIVKLIKDSKLKVQAQIQGEQVRVTGKARDDLQQTIALVRGGNLGQPFQFNNFRD.

It belongs to the YajQ family.

Its function is as follows. Nucleotide-binding protein. The protein is Nucleotide-binding protein ESA_02876 of Cronobacter sakazakii (strain ATCC BAA-894) (Enterobacter sakazakii).